Consider the following 461-residue polypeptide: GTPase Der (461 aa).

EngA-type G domains follow at residues 25–188 (PVVA…PNVA) and 198–371 (RRVA…ASWD). GTP contacts are provided by residues 31 to 38 (GRPNVGKS), 78 to 82 (DTGGW), 140 to 143 (NKVD), 204 to 211 (GKPNVGKS), 251 to 255 (DTAGL), and 316 to 319 (NKWD). The 83-residue stretch at 372–454 (TRIATGPLNI…PIRINVRVRE (83 aa)) folds into the KH-like domain.

It belongs to the TRAFAC class TrmE-Era-EngA-EngB-Septin-like GTPase superfamily. EngA (Der) GTPase family. As to quaternary structure, associates with the 50S ribosomal subunit.

Functionally, GTPase that plays an essential role in the late steps of ribosome biogenesis. This is GTPase Der from Mycobacterium leprae (strain TN).